We begin with the raw amino-acid sequence, 186 residues long: Ribosome-recycling factor (186 aa).

This sequence belongs to the RRF family.

It localises to the cytoplasm. In terms of biological role, responsible for the release of ribosomes from messenger RNA at the termination of protein biosynthesis. May increase the efficiency of translation by recycling ribosomes from one round of translation to another. In Bartonella tribocorum (strain CIP 105476 / IBS 506), this protein is Ribosome-recycling factor.